Consider the following 94-residue polypeptide: Small ribosomal subunit protein bS6 (94 aa).

Belongs to the bacterial ribosomal protein bS6 family.

Its function is as follows. Binds together with bS18 to 16S ribosomal RNA. In Clostridium botulinum (strain Kyoto / Type A2), this protein is Small ribosomal subunit protein bS6.